The chain runs to 301 residues: Pseudouridine-5'-phosphate glycosidase (301 aa).

E23 serves as the catalytic Proton donor. Substrate contacts are provided by K84 and V104. Residue D136 participates in Mn(2+) binding. A substrate-binding site is contributed by 138 to 140; the sequence is SRD. The Nucleophile role is filled by K157.

The protein belongs to the pseudouridine-5'-phosphate glycosidase family. As to quaternary structure, homotrimer. Mn(2+) serves as cofactor.

It carries out the reaction D-ribose 5-phosphate + uracil = psi-UMP + H2O. Its function is as follows. Catalyzes the reversible cleavage of pseudouridine 5'-phosphate (PsiMP) to ribose 5-phosphate and uracil. Functions biologically in the cleavage direction, as part of a pseudouridine degradation pathway. The protein is Pseudouridine-5'-phosphate glycosidase of Mycoplasmopsis agalactiae (strain NCTC 10123 / CIP 59.7 / PG2) (Mycoplasma agalactiae).